The following is a 480-amino-acid chain: 11S globulin subunit beta (480 aa).

Residues M1–S21 form the signal peptide. Pyrrolidone carboxylic acid is present on Q22. Intrachain disulfides connect C48–C81 and C124–C303. Cupin type-1 domains are found at residues E51 to R251 and Q309 to Q458. Residues K408 and R468 each contribute to the Mg(2+) site.

This sequence belongs to the 11S seed storage protein (globulins) family. Hexamer; each subunit is composed of an acidic and a basic chain derived from a single precursor and linked by a disulfide bond.

Functionally, this is a seed storage protein. This Cucurbita maxima (Pumpkin) protein is 11S globulin subunit beta.